A 519-amino-acid chain; its full sequence is Cytochrome P450 4A11 (519 aa).

A propeptide spanning residues 1–4 (MSVS) is cleaved from the precursor. Glutamate 321 is a heme binding site. Serine 440 bears the Phosphoserine mark. A heme-binding site is contributed by cysteine 457.

It belongs to the cytochrome P450 family. Requires heme as cofactor. As to expression, expressed in liver. Expressed in S2 and S3 segments of proximal tubules in cortex and outer medulla of kidney.

It localises to the endoplasmic reticulum membrane. It is found in the microsome membrane. It catalyses the reaction an organic molecule + reduced [NADPH--hemoprotein reductase] + O2 = an alcohol + oxidized [NADPH--hemoprotein reductase] + H2O + H(+). The catalysed reaction is an omega-methyl-long-chain fatty acid + reduced [NADPH--hemoprotein reductase] + O2 = an omega-hydroxy-long-chain fatty acid + oxidized [NADPH--hemoprotein reductase] + H2O + H(+). It carries out the reaction dodecanoate + reduced [NADPH--hemoprotein reductase] + O2 = 12-hydroxydodecanoate + oxidized [NADPH--hemoprotein reductase] + H2O + H(+). The enzyme catalyses tetradecanoate + reduced [NADPH--hemoprotein reductase] + O2 = 14-hydroxytetradecanoate + oxidized [NADPH--hemoprotein reductase] + H2O + H(+). It catalyses the reaction hexadecanoate + reduced [NADPH--hemoprotein reductase] + O2 = 16-hydroxyhexadecanoate + oxidized [NADPH--hemoprotein reductase] + H2O + H(+). The catalysed reaction is (9Z)-octadecenoate + reduced [NADPH--hemoprotein reductase] + O2 = 18-hydroxy-(9Z)-octadecenoate + oxidized [NADPH--hemoprotein reductase] + H2O + H(+). It carries out the reaction (5Z,8Z,11Z,14Z)-eicosatetraenoate + reduced [NADPH--hemoprotein reductase] + O2 = 20-hydroxy-(5Z,8Z,11Z,14Z)-eicosatetraenoate + oxidized [NADPH--hemoprotein reductase] + H2O + H(+). The enzyme catalyses 22-hydroxydocosanoate + reduced [NADPH--hemoprotein reductase] + O2 = 22-oxodocosanoate + oxidized [NADPH--hemoprotein reductase] + 2 H2O + H(+). It catalyses the reaction 22-oxodocosanoate + reduced [NADPH--hemoprotein reductase] + O2 = docosanedioate + oxidized [NADPH--hemoprotein reductase] + H2O + 2 H(+). The catalysed reaction is (9R,10S)-epoxy-octadecanoate + reduced [NADPH--hemoprotein reductase] + O2 = 18-hydroxy-(9R,10S)-epoxy-octadecanoate + oxidized [NADPH--hemoprotein reductase] + H2O + H(+). It carries out the reaction 3-hydroxyhexadecanoate + reduced [NADPH--hemoprotein reductase] + O2 = 3,16-dihydroxyhexadecanoate + oxidized [NADPH--hemoprotein reductase] + H2O + H(+). The protein operates within lipid metabolism; arachidonate metabolism. Its pathway is lipid metabolism; oxylipin biosynthesis. With respect to regulation, activated by cytochrome b5. Functionally, a cytochrome P450 monooxygenase involved in the metabolism of fatty acids and their oxygenated derivatives (oxylipins). Mechanistically, uses molecular oxygen inserting one oxygen atom into a substrate, and reducing the second into a water molecule, with two electrons provided by NADPH via cytochrome P450 reductase (CPR; NADPH-ferrihemoprotein reductase). Catalyzes predominantly the oxidation of the terminal carbon (omega-oxidation) of saturated and unsaturated fatty acids, the catalytic efficiency decreasing in the following order: dodecanoic &gt; tetradecanoic &gt; (9Z)-octadecenoic &gt; (9Z,12Z)-octadecadienoic &gt; hexadecanoic acid. Acts as a major omega-hydroxylase for dodecanoic (lauric) acid in liver. Participates in omega-hydroxylation of (5Z,8Z,11Z,14Z)-eicosatetraenoic acid (arachidonate) to 20-hydroxyeicosatetraenoic acid (20-HETE), a signaling molecule acting both as vasoconstrictive and natriuretic with overall effect on arterial blood pressure. Can also catalyze the oxidation of the penultimate carbon (omega-1 oxidation) of fatty acids with lower efficiency. May contribute to the degradation of saturated very long-chain fatty acids (VLCFAs) such as docosanoic acid, by catalyzing successive omega-oxidations to the corresponding dicarboxylic acid, thereby initiating chain shortening. Omega-hydroxylates (9R,10S)-epoxy-octadecanoate stereoisomer. Plays a minor role in omega-oxidation of long-chain 3-hydroxy fatty acids. Has little activity toward prostaglandins A1 and E1. In Homo sapiens (Human), this protein is Cytochrome P450 4A11.